The sequence spans 123 residues: Transmembrane protein 254 (123 aa).

An N-acetylalanine modification is found at A2. 3 helical membrane passes run L15–P35, L61–V81, and L95–Y115.

Its subcellular location is the membrane. The sequence is that of Transmembrane protein 254 (TMEM254) from Homo sapiens (Human).